We begin with the raw amino-acid sequence, 227 residues long: Pectinesterase inhibitor 28 (227 aa).

A signal peptide spans Met1–Cys25. Residues Ser28–Pro50 form a disordered region. Residues Lys34 to Arg43 are compositionally biased toward basic residues. Cys66 and Cys75 form a disulfide bridge. Asn67, Asn104, and Asn117 each carry an N-linked (GlcNAc...) asparagine glycan. Cys139 and Cys179 are oxidised to a cystine.

It belongs to the PMEI family. In terms of tissue distribution, expressed in roots, leaves, culms and flag leaves.

It is found in the secreted. It localises to the extracellular space. Its subcellular location is the apoplast. In terms of biological role, pectin methylesterase (PME) inhibitor that inhibits PME in vitro. Functions as a critical structural modulator by regulating the degree of pectin methylesterification and the physiochemical properties of the cell wall components. This chain is Pectinesterase inhibitor 28, found in Oryza sativa subsp. japonica (Rice).